Reading from the N-terminus, the 122-residue chain is MIQVQTVLNVADNTGAKKLMCIRILGSSFRRYASIGDIIVCSCKEAAPGGVVKKGDVVKAVVVRTKKEIGRPDGSYIKFDENAAVVIKDDKSPRGTRIFGPVARELREKDFMKIVSLAPEVL.

The protein belongs to the universal ribosomal protein uL14 family. Part of the 50S ribosomal subunit. Forms a cluster with proteins L3 and L19. In the 70S ribosome, L14 and L19 interact and together make contacts with the 16S rRNA in bridges B5 and B8.

In terms of biological role, binds to 23S rRNA. Forms part of two intersubunit bridges in the 70S ribosome. In Desulforudis audaxviator (strain MP104C), this protein is Large ribosomal subunit protein uL14.